A 398-amino-acid chain; its full sequence is GTP cyclohydrolase-2 (398 aa).

The tract at residues 1 to 172 (MNTPTHTHPH…TAAAGASTTE (172 aa)) is unknown. Positions 173-398 (YELVTRTPVP…VKSIPKTGHA (226 aa)) are GTP cyclohydrolase II. 220 to 224 (RVHSS) is a GTP binding site. Cysteine 225, cysteine 236, and cysteine 238 together coordinate Zn(2+). Residues glutamine 241, 263-265 (EGR), and threonine 285 each bind GTP. Aspartate 297 (proton acceptor) is an active-site residue. Arginine 299 serves as the catalytic Nucleophile. GTP is bound by residues serine 320 and lysine 325. Residues 375-398 (QRPQDPSETVDGETVKSIPKTGHA) are disordered.

It in the C-terminal section; belongs to the GTP cyclohydrolase II family. The cofactor is Zn(2+).

The enzyme catalyses GTP + 4 H2O = 2,5-diamino-6-hydroxy-4-(5-phosphoribosylamino)-pyrimidine + formate + 2 phosphate + 3 H(+). Its pathway is cofactor biosynthesis; riboflavin biosynthesis; 5-amino-6-(D-ribitylamino)uracil from GTP: step 1/4. Its function is as follows. Catalyzes the conversion of GTP to 2,5-diamino-6-ribosylamino-4(3H)-pyrimidinone 5'-phosphate (DARP), formate and pyrophosphate. In Xylella fastidiosa (strain 9a5c), this protein is GTP cyclohydrolase-2 (ribA).